A 529-amino-acid chain; its full sequence is uncharacterized protein (529 aa).

The Arf-GAP domain occupies 13–129 (QTAMRKMRAL…LSTLCQEAQR (117 aa)). The segment at 28-51 (CFDCGARNPTWCTVTYGVFLCIDC) adopts a C4-type zinc-finger fold. A compositionally biased stretch (basic and acidic residues) spans 291–301 (QMEAKVAKDPT). Disordered stretches follow at residues 291–313 (QMEAKVAKDPTKAASVDRLGMGG), 335–357 (VLTFKKPSQPKEDDDWEVIDDKY), 398–424 (KSRYTASSSSSSTSRAPTTRLTAGASP), and 468–493 (FGSEDLWGNGSQQRQSSQVPDMSDLK). Over residues 399–420 (SRYTASSSSSSTSRAPTTRLTA) the composition is skewed to low complexity. A compositionally biased stretch (polar residues) spans 476-487 (NGSQQRQSSQVP).

GTPase-activating protein for the ADP ribosylation factor family. This is an uncharacterized protein from Caenorhabditis elegans.